Here is a 359-residue protein sequence, read N- to C-terminus: Archaemetzincin-2 (359 aa).

His254 provides a ligand contact to Zn(2+). The active-site Proton acceptor is the Glu255. Zn(2+)-binding residues include His258, His264, Cys265, Cys270, Cys289, and Cys292.

Belongs to the peptidase M54 family. It depends on Zn(2+) as a cofactor.

Functionally, probable zinc metalloprotease. This is Archaemetzincin-2 (Amz2) from Rattus norvegicus (Rat).